We begin with the raw amino-acid sequence, 1298 residues long: Phosphoribosylformylglycinamidine synthase (1298 aa).

The interval Phe-303–Lys-327 is disordered. ATP contacts are provided by residues Gly-305–Asp-316, Thr-384–Tyr-386, and Ala-676. Residues Asp-677, Glu-716, Asn-720, and Asp-884 each contribute to the Mg(2+) site. Ser-886 contacts ATP. The 254-residue stretch at Val-1045–Asn-1298 folds into the Glutamine amidotransferase type-1 domain. Residue Cys-1138 is the Nucleophile of the active site. Catalysis depends on residues His-1263 and Glu-1265.

In the N-terminal section; belongs to the FGAMS family. In terms of assembly, monomer.

It is found in the cytoplasm. The enzyme catalyses N(2)-formyl-N(1)-(5-phospho-beta-D-ribosyl)glycinamide + L-glutamine + ATP + H2O = 2-formamido-N(1)-(5-O-phospho-beta-D-ribosyl)acetamidine + L-glutamate + ADP + phosphate + H(+). It functions in the pathway purine metabolism; IMP biosynthesis via de novo pathway; 5-amino-1-(5-phospho-D-ribosyl)imidazole from N(2)-formyl-N(1)-(5-phospho-D-ribosyl)glycinamide: step 1/2. In terms of biological role, phosphoribosylformylglycinamidine synthase involved in the purines biosynthetic pathway. Catalyzes the ATP-dependent conversion of formylglycinamide ribonucleotide (FGAR) and glutamine to yield formylglycinamidine ribonucleotide (FGAM) and glutamate. In Pseudomonas savastanoi pv. phaseolicola (strain 1448A / Race 6) (Pseudomonas syringae pv. phaseolicola (strain 1448A / Race 6)), this protein is Phosphoribosylformylglycinamidine synthase.